The sequence spans 384 residues: Guanine nucleotide-binding protein alpha-1 subunit (384 aa).

Gly2 carries N-myristoyl glycine lipidation. Cys5 carries the S-palmitoyl cysteine lipid modification. A G-alpha domain is found at 38-384 (HIQKLLLLGA…RRNLFEAGLL (347 aa)). A G1 motif region spans residues 41-54 (KLLLLGAGESGKST). GTP contacts are provided by Glu49, Ser50, Gly51, Lys52, Ser53, Thr54, Leu188, Tyr189, Thr194, Gly222, Asn288, Lys289, Asp291, and Ala356. A Mg(2+)-binding site is contributed by Ser53. Residues 186-194 (DVLYARVRT) form a G2 motif region. Thr194 contributes to the Mg(2+) binding site. The tract at residues 215 to 224 (YRLFDVGGQR) is G3 motif. The tract at residues 284–291 (MLFLNKFD) is G4 motif. The interval 354-359 (TTALDQ) is G5 motif.

The protein belongs to the G-alpha family. In terms of assembly, g proteins are composed of 3 units; alpha, beta and gamma. The alpha chain contains the guanine nucleotide binding site. The cofactor is Mg(2+).

In terms of biological role, guanine nucleotide-binding proteins (G proteins) are involved as modulators or transducers in various transmembrane signaling systems. In Lupinus luteus (European yellow lupine), this protein is Guanine nucleotide-binding protein alpha-1 subunit (GPA1).